Reading from the N-terminus, the 327-residue chain is Probable protein phosphatase 2C 59 (327 aa).

The signal sequence occupies residues 1 to 24 (MREVLLLGSLVVLALLSLFPCCSC). One can recognise a PPM-type phosphatase domain in the interval 64 to 310 (SYGYASSPGK…DNITCLVVRF (247 aa)). Positions 100, 101, 262, and 301 each coordinate Mn(2+).

Belongs to the PP2C family. Mg(2+) is required as a cofactor. The cofactor is Mn(2+).

The catalysed reaction is O-phospho-L-seryl-[protein] + H2O = L-seryl-[protein] + phosphate. It catalyses the reaction O-phospho-L-threonyl-[protein] + H2O = L-threonyl-[protein] + phosphate. This is Probable protein phosphatase 2C 59 from Oryza sativa subsp. japonica (Rice).